Consider the following 420-residue polypeptide: Glucose-1-phosphate adenylyltransferase (420 aa).

Alpha-D-glucose 1-phosphate is bound by residues Tyr107, Gly172, 187 to 188 (EK), and Ser205.

It belongs to the bacterial/plant glucose-1-phosphate adenylyltransferase family. As to quaternary structure, homotetramer.

The enzyme catalyses alpha-D-glucose 1-phosphate + ATP + H(+) = ADP-alpha-D-glucose + diphosphate. The protein operates within glycan biosynthesis; glycogen biosynthesis. Involved in the biosynthesis of ADP-glucose, a building block required for the elongation reactions to produce glycogen. Catalyzes the reaction between ATP and alpha-D-glucose 1-phosphate (G1P) to produce pyrophosphate and ADP-Glc. This Rhizobium etli (strain CIAT 652) protein is Glucose-1-phosphate adenylyltransferase.